The chain runs to 867 residues: FO synthase (867 aa).

The tract at residues 1–22 is disordered; the sequence is MTTSATSGTGPADPAGPTENSM. Radical SAM core domains follow at residues 75–325 and 534–769; these read ITYS…LQAP and VTYI…LLHP. Positions 76-407 are cofG-like; it reads TYSKSVFVPL…PRLRPHVAAL (332 aa). Positions 89, 93, 96, 548, 552, and 555 each coordinate [4Fe-4S] cluster. The segment at 511-844 is cofH-like; that stretch reads EGPALDALCG…KPRTTLYGPV (334 aa). Residues 835-867 are disordered; that stretch reads KPRTTLYGPVPEERQRAARDSDGHLPELLPVLD. Over residues 845–859 the composition is skewed to basic and acidic residues; sequence PEERQRAARDSDGHL.

In the N-terminal section; belongs to the radical SAM superfamily. CofG family. It in the C-terminal section; belongs to the radical SAM superfamily. CofH family. It depends on [4Fe-4S] cluster as a cofactor.

The catalysed reaction is 5-amino-6-(D-ribitylamino)uracil + L-tyrosine + S-adenosyl-L-methionine = 5-amino-5-(4-hydroxybenzyl)-6-(D-ribitylimino)-5,6-dihydrouracil + 2-iminoacetate + 5'-deoxyadenosine + L-methionine + H(+). The enzyme catalyses 5-amino-5-(4-hydroxybenzyl)-6-(D-ribitylimino)-5,6-dihydrouracil + S-adenosyl-L-methionine = 7,8-didemethyl-8-hydroxy-5-deazariboflavin + 5'-deoxyadenosine + L-methionine + NH4(+) + H(+). It participates in cofactor biosynthesis; coenzyme F0 biosynthesis. In terms of biological role, catalyzes the radical-mediated synthesis of 7,8-didemethyl-8-hydroxy-5-deazariboflavin (FO) from 5-amino-6-(D-ribitylamino)uracil and L-tyrosine. This chain is FO synthase (fbiC), found in Streptomyces coelicolor (strain ATCC BAA-471 / A3(2) / M145).